The chain runs to 204 residues: Elongation factor Ts (204 aa).

Residues 80–83 (TDFV) are involved in Mg(2+) ion dislocation from EF-Tu.

Belongs to the EF-Ts family.

It is found in the cytoplasm. Functionally, associates with the EF-Tu.GDP complex and induces the exchange of GDP to GTP. It remains bound to the aminoacyl-tRNA.EF-Tu.GTP complex up to the GTP hydrolysis stage on the ribosome. The polypeptide is Elongation factor Ts (Caldicellulosiruptor saccharolyticus (strain ATCC 43494 / DSM 8903 / Tp8T 6331)).